The following is a 321-amino-acid chain: Lipoyl synthase (321 aa).

C68, C73, C79, C94, C98, C101, and S308 together coordinate [4Fe-4S] cluster. Residues 80–297 (FNHGTATFMI…RVFAEEIGFT (218 aa)) enclose the Radical SAM core domain.

Belongs to the radical SAM superfamily. Lipoyl synthase family. [4Fe-4S] cluster serves as cofactor.

It is found in the cytoplasm. It catalyses the reaction [[Fe-S] cluster scaffold protein carrying a second [4Fe-4S](2+) cluster] + N(6)-octanoyl-L-lysyl-[protein] + 2 oxidized [2Fe-2S]-[ferredoxin] + 2 S-adenosyl-L-methionine + 4 H(+) = [[Fe-S] cluster scaffold protein] + N(6)-[(R)-dihydrolipoyl]-L-lysyl-[protein] + 4 Fe(3+) + 2 hydrogen sulfide + 2 5'-deoxyadenosine + 2 L-methionine + 2 reduced [2Fe-2S]-[ferredoxin]. The protein operates within protein modification; protein lipoylation via endogenous pathway; protein N(6)-(lipoyl)lysine from octanoyl-[acyl-carrier-protein]: step 2/2. Catalyzes the radical-mediated insertion of two sulfur atoms into the C-6 and C-8 positions of the octanoyl moiety bound to the lipoyl domains of lipoate-dependent enzymes, thereby converting the octanoylated domains into lipoylated derivatives. This is Lipoyl synthase from Shewanella woodyi (strain ATCC 51908 / MS32).